Here is a 264-residue protein sequence, read N- to C-terminus: Thiazole synthase (264 aa).

Catalysis depends on lysine 106, which acts as the Schiff-base intermediate with DXP. Residues glycine 167, 193 to 194, and 215 to 216 contribute to the 1-deoxy-D-xylulose 5-phosphate site; these read AG and NT.

It belongs to the ThiG family. As to quaternary structure, homotetramer. Forms heterodimers with either ThiH or ThiS.

It is found in the cytoplasm. It catalyses the reaction [ThiS sulfur-carrier protein]-C-terminal-Gly-aminoethanethioate + 2-iminoacetate + 1-deoxy-D-xylulose 5-phosphate = [ThiS sulfur-carrier protein]-C-terminal Gly-Gly + 2-[(2R,5Z)-2-carboxy-4-methylthiazol-5(2H)-ylidene]ethyl phosphate + 2 H2O + H(+). It participates in cofactor biosynthesis; thiamine diphosphate biosynthesis. Functionally, catalyzes the rearrangement of 1-deoxy-D-xylulose 5-phosphate (DXP) to produce the thiazole phosphate moiety of thiamine. Sulfur is provided by the thiocarboxylate moiety of the carrier protein ThiS. In vitro, sulfur can be provided by H(2)S. The sequence is that of Thiazole synthase from Xylella fastidiosa (strain 9a5c).